The primary structure comprises 379 residues: Dual-specificity RNA methyltransferase RlmN (379 aa).

Residue Glu-95 is the Proton acceptor of the active site. The Radical SAM core domain occupies 101-345 (EETRGTLCVS…TTVRKTRGDD (245 aa)). The cysteines at positions 108 and 350 are disulfide-linked. Positions 115, 119, and 122 each coordinate [4Fe-4S] cluster. S-adenosyl-L-methionine-binding positions include 176–177 (GE), Ser-208, 230–232 (SLH), and Asn-307. The S-methylcysteine intermediate role is filled by Cys-350.

The protein belongs to the radical SAM superfamily. RlmN family. Requires [4Fe-4S] cluster as cofactor.

It is found in the cytoplasm. The enzyme catalyses adenosine(2503) in 23S rRNA + 2 reduced [2Fe-2S]-[ferredoxin] + 2 S-adenosyl-L-methionine = 2-methyladenosine(2503) in 23S rRNA + 5'-deoxyadenosine + L-methionine + 2 oxidized [2Fe-2S]-[ferredoxin] + S-adenosyl-L-homocysteine. It catalyses the reaction adenosine(37) in tRNA + 2 reduced [2Fe-2S]-[ferredoxin] + 2 S-adenosyl-L-methionine = 2-methyladenosine(37) in tRNA + 5'-deoxyadenosine + L-methionine + 2 oxidized [2Fe-2S]-[ferredoxin] + S-adenosyl-L-homocysteine. In terms of biological role, specifically methylates position 2 of adenine 2503 in 23S rRNA and position 2 of adenine 37 in tRNAs. m2A2503 modification seems to play a crucial role in the proofreading step occurring at the peptidyl transferase center and thus would serve to optimize ribosomal fidelity. The chain is Dual-specificity RNA methyltransferase RlmN from Burkholderia cenocepacia (strain ATCC BAA-245 / DSM 16553 / LMG 16656 / NCTC 13227 / J2315 / CF5610) (Burkholderia cepacia (strain J2315)).